The primary structure comprises 488 residues: uncharacterized protein (488 aa).

12 consecutive transmembrane segments (helical) span residues 2-22 (FGLPIPIIGLLIAVFVLVFLV), 27-47 (VHAFIAMLIAASIAGLVGGMS), 59-79 (FGGTLGSIGIVIGLGVMMGSV), 106-126 (LAITGYVVSIPIFVDSAFVIL), 176-196 (IGAMLLTGMCMAFLPVVGIVL), 241-261 (LLPIVLPIVLIFIKAVVHLFV), 275-295 (IVSFLGHPVIVLALSVLISVY), 314-334 (VKTAGIILLVTGAGGALGAVL), 347-367 (IANLPISPILIPFIVSTLVRF), 368-388 (IQGSGTVAMITAASISSPILA), 438-458 (VPTTIAWGIGGISVILANLIF), and 461-481 (DGSVFDLLFPVVVLASILFYI).

It belongs to the GntP permease family.

The protein localises to the cell inner membrane. This is an uncharacterized protein from Haemophilus influenzae (strain ATCC 51907 / DSM 11121 / KW20 / Rd).